A 132-amino-acid polypeptide reads, in one-letter code: Small ribosomal subunit protein uS8 (132 aa).

This sequence belongs to the universal ribosomal protein uS8 family. In terms of assembly, part of the 30S ribosomal subunit. Contacts proteins S5 and S12.

Its function is as follows. One of the primary rRNA binding proteins, it binds directly to 16S rRNA central domain where it helps coordinate assembly of the platform of the 30S subunit. The polypeptide is Small ribosomal subunit protein uS8 (Mycoplasmopsis synoviae (strain 53) (Mycoplasma synoviae)).